The following is a 508-amino-acid chain: Maturase K (508 aa).

It belongs to the intron maturase 2 family. MatK subfamily.

The protein resides in the plastid. It is found in the chloroplast. Usually encoded in the trnK tRNA gene intron. Probably assists in splicing its own and other chloroplast group II introns. In Marathrum schiedeanum, this protein is Maturase K.